The sequence spans 765 residues: Glucosamine inositolphosphorylceramide transferase 1 (765 aa).

Helical transmembrane passes span 43–63 (FFAS…WFVF), 394–414 (VILG…LGFL), and 476–496 (MGKF…CVGV). Substrate contacts are provided by residues Asn553, 577 to 582 (NSLNNR), 598 to 600 (DDD), Arg628, and 683 to 687 (FNCED). Asp600 provides a ligand contact to Mn(2+). Cys685 and Cys738 are oxidised to a cystine. Asp687 is an active-site residue.

The protein belongs to the glycosyltransferase 64 family. It depends on Mn(2+) as a cofactor. Specifically and highly expressed in developing embryos and mature seeds. Also detected at low levels in stigma and pollen.

The protein localises to the membrane. The catalysed reaction is an N-(2R-hydroxy-very-long-chain fatty acyl)-(R)-4-hydroxysphingoid base + a 1,2-diacyl-sn-glycero-3-phospho-(1D-myo-inositol) = a 1D-myo-inositol-1-phospho-N-[(R)-2-hydroxy-very-long-chain fatty acyl]-(R)-4-hydroxysphingoid base + a 1,2-diacyl-sn-glycerol. It participates in sphingolipid metabolism. In terms of biological role, glycosyltransferase that mediates the glycosylation of glycosylinositol phosphorylceramides (GIPCs), the major sphingolipids in the plasma membrane; acts as a HexN(Ac)-specific GIPC sugar transferase and accepts glucosamine (GlcN) and N-acetylglucosamine (GlcNAc) as the sugar unit. Responsible for the glycosylation of a subgroup of GIPCs found in seeds and pollen that contain GlcNAc and GlcN (GlcN(Ac)). Maybe involved in the maintenance of cell-cell adhesion. This chain is Glucosamine inositolphosphorylceramide transferase 1, found in Arabidopsis thaliana (Mouse-ear cress).